The primary structure comprises 358 residues: Histamine H2 receptor (358 aa).

Residues 1-22 (MEPNGTVHSCCLDSMALKVTIS) are Extracellular-facing. A glycan (N-linked (GlcNAc...) asparagine) is linked at Asn-4. A helical transmembrane segment spans residues 23 to 44 (VVLTTLILITIAGNVVVCLAVS). At 45–57 (LNRRLRSLTNCFI) the chain is on the cytoplasmic side. The chain crosses the membrane as a helical span at residues 58–81 (VSLAATDLLLGLLVLPFSAIYQLS). Residues 82 to 92 (FTWSFGHVFCN) are Extracellular-facing. Cys-91 and Cys-173 are joined by a disulfide. The helical transmembrane segment at 93–114 (IYTSLDVMLCTASILNLFMISL) threads the bilayer. At 115-134 (DRYCAVTDPLRYPVLVTPVR) the chain is on the cytoplasmic side. The helical transmembrane segment at 135–159 (VAISLVFIWVISITLSFLSIHLGWN) threads the bilayer. Residues 160–179 (SRNGTRGGNDTFKCKVQVNE) lie on the Extracellular side of the membrane. A helical membrane pass occupies residues 180–203 (VYGLVDGLVTFYLPLLIMCVTYYR). Over 204–233 (IFKIAREQAKRINHISSWKAATIREHKATV) the chain is Cytoplasmic. The chain crosses the membrane as a helical span at residues 234 to 257 (TLAAVMGAFIICWFPYFTAFVYRG). Topologically, residues 258-266 (LRGDDAINE) are extracellular. Residues 267–288 (AVEGIVLWLGYANSALNPILYA) form a helical membrane-spanning segment. Residues 289–358 (ALNRDFRTAY…LTHPQGNPIR (70 aa)) are Cytoplasmic-facing. Residue Cys-304 is the site of S-palmitoyl cysteine attachment.

The protein belongs to the G-protein coupled receptor 1 family.

It localises to the cell membrane. Its function is as follows. The H2 subclass of histamine receptors mediates gastric acid secretion. The activity of this receptor is mediated by G proteins which activate adenylyl cyclase. This is Histamine H2 receptor (Hrh2) from Rattus norvegicus (Rat).